We begin with the raw amino-acid sequence, 114 residues long: Small ribosomal subunit protein bS16 (114 aa).

The protein belongs to the bacterial ribosomal protein bS16 family.

In Prochlorococcus marinus subsp. pastoris (strain CCMP1986 / NIES-2087 / MED4), this protein is Small ribosomal subunit protein bS16.